Reading from the N-terminus, the 448-residue chain is Chromosomal replication initiator protein DnaA 1 (448 aa).

Residues 1–76 are domain I, interacts with DnaA modulators; it reads MLTSETQNVW…FLPVDMSGEP (76 aa). Residues 76–111 form a domain II region; it reads PAIRFIIAPPQKKIIPPNHFSISSSQKEEQSPNSDV. Positions 112 to 328 are domain III, AAA+ region; it reads KLNNNYRFEN…GAINRLSAHC (217 aa). ATP is bound by residues Gly156, Gly158, Lys159, and Thr160. The tract at residues 329 to 448 is domain IV, binds dsDNA; that stretch reads RLLDLNITEE…IGMVRRNIES (120 aa).

Belongs to the DnaA family. Oligomerizes as a right-handed, spiral filament on DNA at oriC.

It localises to the cytoplasm. Plays an essential role in the initiation and regulation of chromosomal replication. ATP-DnaA binds to the origin of replication (oriC) to initiate formation of the DNA replication initiation complex once per cell cycle. Binds the DnaA box (a 9 base pair repeat at the origin) and separates the double-stranded (ds)DNA. Forms a right-handed helical filament on oriC DNA; dsDNA binds to the exterior of the filament while single-stranded (ss)DNA is stabiized in the filament's interior. The ATP-DnaA-oriC complex binds and stabilizes one strand of the AT-rich DNA unwinding element (DUE), permitting loading of DNA polymerase. After initiation quickly degrades to an ADP-DnaA complex that is not apt for DNA replication. Binds acidic phospholipids. The chain is Chromosomal replication initiator protein DnaA 1 from Protochlamydia amoebophila (strain UWE25).